A 738-amino-acid chain; its full sequence is Photosystem I P700 chlorophyll a apoprotein A2 (738 aa).

8 consecutive transmembrane segments (helical) span residues 46–69, 135–158, 175–199, 273–291, 333–356, 372–398, 420–442, and 521–539; these read LFST…FHIA, LYQG…LHLQ, LNHH…HVAI, IAHH…GHMY, LHFQ…QHMY, AALY…IFFI, AIIS…LYVH, and FLVH…LILV. Residues Cys-563 and Cys-572 each contribute to the [4Fe-4S] cluster site. A run of 2 helical transmembrane segments spans residues 579-600 and 647-669; these read AFYL…YWHW and LAVW…MFLI. Chlorophyll a is bound by residues His-658, Met-666, and Tyr-674. Residue Trp-675 coordinates phylloquinone. Residues 711 to 731 form a helical membrane-spanning segment; the sequence is VVGLAHFTIGYILTYAAFLIA.

Belongs to the PsaA/PsaB family. In terms of assembly, the PsaA/B heterodimer binds the P700 chlorophyll special pair and subsequent electron acceptors. PSI consists of a core antenna complex that captures photons, and an electron transfer chain that converts photonic excitation into a charge separation. The cyanobacterial PSI reaction center is composed of one copy each of PsaA,B,C,D,E,F,I,J,K,L,M and X, and forms trimeric complexes. The cofactor is PSI electron transfer chain: 5 chlorophyll a, 1 chlorophyll a', 2 phylloquinones and 3 4Fe-4S clusters. PSI core antenna: 90 chlorophyll a, 22 carotenoids, 3 phospholipids and 1 galactolipid. P700 is a chlorophyll a/chlorophyll a' dimer, A0 is one or more chlorophyll a, A1 is one or both phylloquinones and FX is a shared 4Fe-4S iron-sulfur center..

Its subcellular location is the cellular thylakoid membrane. It carries out the reaction reduced [plastocyanin] + hnu + oxidized [2Fe-2S]-[ferredoxin] = oxidized [plastocyanin] + reduced [2Fe-2S]-[ferredoxin]. PsaA and PsaB bind P700, the primary electron donor of photosystem I (PSI), as well as the electron acceptors A0, A1 and FX. PSI is a plastocyanin/cytochrome c6-ferredoxin oxidoreductase, converting photonic excitation into a charge separation, which transfers an electron from the donor P700 chlorophyll pair to the spectroscopically characterized acceptors A0, A1, FX, FA and FB in turn. Oxidized P700 is reduced on the lumenal side of the thylakoid membrane by plastocyanin or cytochrome c6. This is Photosystem I P700 chlorophyll a apoprotein A2 from Synechococcus sp. (strain WH7803).